Reading from the N-terminus, the 180-residue chain is Ribonuclease M5 (180 aa).

A Toprim domain is found at 5–90; the sequence is KQIIIVEGKT…NAFIKKDDIS (86 aa). The Mg(2+) site is built by Glu11, Asp59, and Asp61.

This sequence belongs to the ribonuclease M5 family. Mg(2+) serves as cofactor.

The protein resides in the cytoplasm. It catalyses the reaction Endonucleolytic cleavage of RNA, removing 21 and 42 nucleotides, respectively, from the 5'- and 3'-termini of a 5S-rRNA precursor.. Functionally, required for correct processing of both the 5' and 3' ends of 5S rRNA precursor. Cleaves both sides of a double-stranded region yielding mature 5S rRNA in one step. The protein is Ribonuclease M5 of Mycoplasma capricolum subsp. capricolum (strain California kid / ATCC 27343 / NCTC 10154).